Reading from the N-terminus, the 311-residue chain is uncharacterized protein (311 aa).

A helical membrane pass occupies residues 168–188; that stretch reads FNVMKGAILGLPIIGGIIVGV.

The protein resides in the cell membrane. This is an uncharacterized protein from Edwardsiella tarda.